The sequence spans 258 residues: Isoprenyl transferase 2 (258 aa).

Residues Met1 to Leu18 are compositionally biased toward pro residues. The tract at residues Met1–Gln21 is disordered. Residue Asp32 is part of the active site. Asp32 lines the Mg(2+) pocket. Substrate contacts are provided by residues Gly33–Arg36, Trp37, Arg45, His49, and Ser77–Glu79. Catalysis depends on Asn80, which acts as the Proton acceptor. Residues Trp81, Arg83, Arg200, and Arg206 to Ser208 each bind substrate. Residue Glu219 coordinates Mg(2+).

This sequence belongs to the UPP synthase family. As to quaternary structure, homodimer. Mg(2+) is required as a cofactor.

Its function is as follows. Catalyzes the condensation of isopentenyl diphosphate (IPP) with allylic pyrophosphates generating different type of terpenoids. This is Isoprenyl transferase 2 from Nostoc sp. (strain PCC 7120 / SAG 25.82 / UTEX 2576).